Here is a 453-residue protein sequence, read N- to C-terminus: tRNA-2-methylthio-N(6)-dimethylallyladenosine synthase (453 aa).

The MTTase N-terminal domain maps to 21–137 (RGVYISTYGC…LPQLVAKSFA (117 aa)). [4Fe-4S] cluster is bound by residues Cys30, Cys66, Cys100, Cys174, Cys178, and Cys181. The 230-residue stretch at 160-389 (RNPGVATYVN…FDVHEAMAFE (230 aa)) folds into the Radical SAM core domain. The region spanning 392 to 453 (KRYEGTTMKV…FPAVFRGEMI (62 aa)) is the TRAM domain.

This sequence belongs to the methylthiotransferase family. MiaB subfamily. Monomer. It depends on [4Fe-4S] cluster as a cofactor.

It is found in the cytoplasm. The enzyme catalyses N(6)-dimethylallyladenosine(37) in tRNA + (sulfur carrier)-SH + AH2 + 2 S-adenosyl-L-methionine = 2-methylsulfanyl-N(6)-dimethylallyladenosine(37) in tRNA + (sulfur carrier)-H + 5'-deoxyadenosine + L-methionine + A + S-adenosyl-L-homocysteine + 2 H(+). Catalyzes the methylthiolation of N6-(dimethylallyl)adenosine (i(6)A), leading to the formation of 2-methylthio-N6-(dimethylallyl)adenosine (ms(2)i(6)A) at position 37 in tRNAs that read codons beginning with uridine. This Bdellovibrio bacteriovorus (strain ATCC 15356 / DSM 50701 / NCIMB 9529 / HD100) protein is tRNA-2-methylthio-N(6)-dimethylallyladenosine synthase.